The chain runs to 282 residues: Adenosylcobinamide-GDP ribazoletransferase (282 aa).

6 helical membrane passes run 47 to 67 (GVGI…QALL), 72 to 92 (FTPL…TGGF), 124 to 144 (AFGA…LAML), 167 to 187 (AALL…IWLL), 208 to 228 (GSLL…GLAL), and 231 to 251 (ISLI…GALF).

This sequence belongs to the CobS family. The cofactor is Mg(2+).

It is found in the cell inner membrane. It catalyses the reaction alpha-ribazole + adenosylcob(III)inamide-GDP = adenosylcob(III)alamin + GMP + H(+). The catalysed reaction is alpha-ribazole 5'-phosphate + adenosylcob(III)inamide-GDP = adenosylcob(III)alamin 5'-phosphate + GMP + H(+). Its pathway is cofactor biosynthesis; adenosylcobalamin biosynthesis; adenosylcobalamin from cob(II)yrinate a,c-diamide: step 7/7. In terms of biological role, joins adenosylcobinamide-GDP and alpha-ribazole to generate adenosylcobalamin (Ado-cobalamin). Also synthesizes adenosylcobalamin 5'-phosphate from adenosylcobinamide-GDP and alpha-ribazole 5'-phosphate. The sequence is that of Adenosylcobinamide-GDP ribazoletransferase from Polaromonas sp. (strain JS666 / ATCC BAA-500).